A 370-amino-acid chain; its full sequence is MTSLPPGTTGDPDLFSGPSPAGSTPANQSAEASESNVSATVPRAAAVTPFQSLQLVHQLKGLIVMLYSIVVVVGLVGNCLLVLVIARVRRLHNVTNFLIGNLALSDVLMCAACVPLTLAYAFEPRGWVFGGGLCHLVFFLQPVTVYVSVFTLTTIAVDRYVVLVHPLRRRISLKLSAYAVLGIWALSAVLALPAAVHTYHVELKPHDVRLCEEFWGSQERQRQIYAWGLLLGTYLLPLLAILLSYVRVSVKLRNRVVPGSVTQSQADWDRARRRRTFCLLVVVVVVFALCWLPLHIFNLLRDLDPRAIDPYAFGLVQLLCHWLAMSSACYNPFIYAWLHDSFREELRKMLLSWPRKIVPHGQNMTVSVVI.

The disordered stretch occupies residues 1–34 (MTSLPPGTTGDPDLFSGPSPAGSTPANQSAEASE). The Extracellular portion of the chain corresponds to 1–62 (MTSLPPGTTG…LQLVHQLKGL (62 aa)). Polar residues predominate over residues 21–34 (AGSTPANQSAEASE). Asn27 and Asn36 each carry an N-linked (GlcNAc...) asparagine glycan. A helical membrane pass occupies residues 63 to 83 (IVMLYSIVVVVGLVGNCLLVL). Topologically, residues 84 to 101 (VIARVRRLHNVTNFLIGN) are cytoplasmic. The chain crosses the membrane as a helical span at residues 102–122 (LALSDVLMCAACVPLTLAYAF). The Extracellular portion of the chain corresponds to 123 to 126 (EPRG). A helical membrane pass occupies residues 127–147 (WVFGGGLCHLVFFLQPVTVYV). A disulfide bridge connects residues Cys134 and Cys211. At 148 to 175 (SVFTLTTIAVDRYVVLVHPLRRRISLKL) the chain is on the cytoplasmic side. A helical transmembrane segment spans residues 176–196 (SAYAVLGIWALSAVLALPAAV). Residues 197–223 (HTYHVELKPHDVRLCEEFWGSQERQRQ) lie on the Extracellular side of the membrane. Residues 224 to 244 (IYAWGLLLGTYLLPLLAILLS) form a helical membrane-spanning segment. The Cytoplasmic portion of the chain corresponds to 245–276 (YVRVSVKLRNRVVPGSVTQSQADWDRARRRRT). The chain crosses the membrane as a helical span at residues 277–297 (FCLLVVVVVVFALCWLPLHIF). The Extracellular segment spans residues 298-317 (NLLRDLDPRAIDPYAFGLVQ). The chain crosses the membrane as a helical span at residues 318–338 (LLCHWLAMSSACYNPFIYAWL). Over 339 to 370 (HDSFREELRKMLLSWPRKIVPHGQNMTVSVVI) the chain is Cytoplasmic. A required for interaction with GRIP1, GRIP2 and PICK1 region spans residues 365–370 (TVSVVI).

The protein belongs to the G-protein coupled receptor 1 family. Interacts through its C-terminal region with the PDZ domain-containing proteins GRIP1, GRIP2 and PICK1. Interacts with PDZ domains 4 and 5 of GRIP1 and with the PDZ domain of PICK1. Widely expressed, with highest levels in pituitary, cerebellum, and hypothalamus.

Its subcellular location is the cell membrane. Receptor for prolactin-releasing peptide (PrRP). Implicated in lactation, regulation of food intake and pain-signal processing. The protein is Prolactin-releasing peptide receptor (Prlhr) of Rattus norvegicus (Rat).